The sequence spans 226 residues: N-(5'-phosphoribosyl)anthranilate isomerase (226 aa).

Belongs to the TrpF family.

The enzyme catalyses N-(5-phospho-beta-D-ribosyl)anthranilate = 1-(2-carboxyphenylamino)-1-deoxy-D-ribulose 5-phosphate. The protein operates within amino-acid biosynthesis; L-tryptophan biosynthesis; L-tryptophan from chorismate: step 3/5. The protein is N-(5'-phosphoribosyl)anthranilate isomerase (TRP1) of Candida albicans (strain SC5314 / ATCC MYA-2876) (Yeast).